Consider the following 447-residue polypeptide: Signal recognition particle 54 kDa protein (447 aa).

Residues 105–112 (GVQGSGKT), 187–191 (DTAGR), and 247–250 (TKMD) contribute to the GTP site.

The protein belongs to the GTP-binding SRP family. SRP54 subfamily. As to quaternary structure, part of the signal recognition particle protein translocation system, which is composed of SRP and FtsY. Archaeal SRP consists of a 7S RNA molecule of 300 nucleotides and two protein subunits: SRP54 and SRP19.

The protein resides in the cytoplasm. The catalysed reaction is GTP + H2O = GDP + phosphate + H(+). In terms of biological role, involved in targeting and insertion of nascent membrane proteins into the cytoplasmic membrane. Binds to the hydrophobic signal sequence of the ribosome-nascent chain (RNC) as it emerges from the ribosomes. The SRP-RNC complex is then targeted to the cytoplasmic membrane where it interacts with the SRP receptor FtsY. The chain is Signal recognition particle 54 kDa protein from Hyperthermus butylicus (strain DSM 5456 / JCM 9403 / PLM1-5).